The primary structure comprises 413 residues: Alpha-1-antitrypsin 1-5 (413 aa).

Positions 1 to 24 (MTPSISWCLLLLAGLCCLVPSFLA) are cleaved as a signal peptide. N-linked (GlcNAc...) asparagine glycosylation is found at asparagine 64, asparagine 101, and asparagine 265. Residues 368–387 (AATVLQGGFLSMPPILHFNR) form an RCL region.

The protein belongs to the serpin family.

It is found in the secreted. Its function is as follows. Does not inhibit elastase or chymotrypsin. No target protease has been identified to date. The chain is Alpha-1-antitrypsin 1-5 (Serpina1e) from Mus musculus (Mouse).